The primary structure comprises 800 residues: Endoglucanase (800 aa).

The N-terminal stretch at 1-30 is a signal peptide; the sequence is MMLRKKTKQLISSILILVLLLSLFPTALAA. Residue E190 is the Proton donor of the active site. The active-site Nucleophile is the E305. The interval 761 to 800 is disordered; that stretch reads AATTEPVEPEPVDPGEETPPVDEKEAKTEQKEAEKEEKEE. The segment covering 767–780 has biased composition (acidic residues); sequence VEPEPVDPGEETPP. Residues 781–800 are compositionally biased toward basic and acidic residues; that stretch reads VDEKEAKTEQKEAEKEEKEE.

This sequence belongs to the glycosyl hydrolase 5 (cellulase A) family.

It carries out the reaction Endohydrolysis of (1-&gt;4)-beta-D-glucosidic linkages in cellulose, lichenin and cereal beta-D-glucans.. The chain is Endoglucanase from Halalkalibacter akibai (strain ATCC 43226 / DSM 21942 / CIP 109018 / JCM 9157 / 1139) (Bacillus akibai).